The sequence spans 270 residues: uncharacterized protein (270 aa).

Residues 22–31 show a composition bias toward basic and acidic residues; it reads EAPQRTEASR. The segment at 22-42 is disordered; it reads EAPQRTEASRTHPSPFLALPG.

This is an uncharacterized protein from Homo sapiens (Human).